Here is a 2009-residue protein sequence, read N- to C-terminus: Protein Daple (2009 aa).

One can recognise a Calponin-homology (CH) domain in the interval 11 to 131 (LFLQSPLVTW…KVLLLVLGCA (121 aa)). Residues 221 to 251 (QTQQPPSPGKFSSPDSTPSPTSSLSSEDKQH) form a disordered region. A phosphoserine mark is found at Ser227 and Ser239. Residues 232–245 (SSPDSTPSPTSSLS) show a composition bias toward low complexity. Coiled coils occupy residues 247 to 425 (EDKQ…QKQS) and 456 to 1008 (ELNE…TQEG). Ser486 carries the phosphoserine modification. Positions 1002–1036 (LRQTQEGGDKAQNALKRPPGKVTSHQEKEAWEPSH) are disordered. Residues 1025–1036 (SHQEKEAWEPSH) show a composition bias toward basic and acidic residues. The stretch at 1190 to 1384 (HRNLELEHKE…LEEKIMDQYK (195 aa)) forms a coiled coil. The span at 1410 to 1419 (KEGSRERLKS) shows a compositional bias: basic and acidic residues. Disordered stretches follow at residues 1410–1716 (KEGS…GAKM) and 1757–1787 (GMPS…HMPV). The segment covering 1430-1439 (PSDPASPSPS) has biased composition (low complexity). Ser1435 carries the phosphoserine modification. Over residues 1440-1449 (QALRSQTENP) the composition is skewed to polar residues. 2 stretches are compositionally biased toward low complexity: residues 1510 to 1524 (TFST…SSST) and 1562 to 1581 (NSLE…SLKG). The residue at position 1592 (Ser1592) is a Phosphoserine. A GBA motif is present at residues 1652-1683 (HSASPSSEMVTLEEFLEESNRGGSPTHDTPSC). Positions 1681 to 1697 (PSCRDDLLSDYFRKAHD) are enriched in basic and acidic residues. Over residues 1761–1783 (RQVQPPQSLSLGRPRQTTMTQNC) the composition is skewed to polar residues. The residue at position 1798 (Ser1798) is a Phosphoserine. Positions 1808-2009 (SGPEACRPES…QTVWYEYGCV (202 aa)) are disordered. Residues 1866-1883 (RPLDTRRFSLAPPKEERL) show a composition bias toward basic and acidic residues. The segment covering 1898-1911 (GCSSGSNPQIQHFS) has biased composition (polar residues). Residues 1943–1954 (TSEGDGGPGHGY) are compositionally biased toward gly residues. Positions 1981–1991 (SQGSSSKSTPA) are enriched in polar residues. The PDZ-binding motif lies at 2006-2009 (YGCV). The interval 2007 to 2009 (GCV) is DVL1-binding.

Belongs to the CCDC88 family. Homooligomer. Interacts with DVL1 (via PDZ domain); dissociates following initiation of non-canonical Wnt signaling. Interacts (via C-terminus) with ligand-activated Wnt receptor FZD7; competes with DVL1 for binding to FZD7 and displaces DVL1 from ligand-activated FZD7. Interacts (via GBA motif) with guanine nucleotide-binding protein G(i) alpha subunits GNAI1, GNAI2 and GNAI3 (inactive GDP-bound form); interacts with higher affinity with GNAI1 and GNAI3 than with GNAI2 and interaction leads to G(i) alpha subunit activation. Does not interact with GNAO1.

The protein resides in the cytoplasm. Its subcellular location is the cell junction. In terms of biological role, required for activation of guanine nucleotide-binding proteins (G-proteins) during non-canonical Wnt signaling. Binds to ligand-activated Wnt receptor FZD7, displacing DVL1 from the FZD7 receptor and leading to inhibition of canonical Wnt signaling. Acts as a non-receptor guanine nucleotide exchange factor by also binding to guanine nucleotide-binding protein G(i) alpha (Gi-alpha) subunits, leading to their activation. Binding to Gi-alpha subunits displaces the beta and gamma subunits from the heterotrimeric G-protein complex, triggering non-canonical Wnt responses such as activation of RAC1 and PI3K-AKT signaling. Promotes apical constriction of cells via ARHGEF18. In Mus musculus (Mouse), this protein is Protein Daple (Ccdc88c).